Here is a 516-residue protein sequence, read N- to C-terminus: Delta(24)-sterol reductase (516 aa).

The first 22 residues, 1-22 (MEPAVSLAVCALLFLLWVRVKG), serve as a signal peptide directing secretion. Topologically, residues 23-31 (LEFVLIHQR) are lumenal. Residues 32-52 (WVFVCLFLLPLSLIFDIYYYV) form a helical membrane-spanning segment. The Cytoplasmic segment spans residues 53-516 (RAWVVFKLSS…YDKICKAARH (464 aa)). The FAD-binding PCMH-type domain occupies 58 to 234 (FKLSSAPRLH…VAAEIRIIPA (177 aa)). 163 to 175 (TVGGLIMGTGIES) provides a ligand contact to FAD.

Belongs to the FAD-binding oxidoreductase/transferase type 4 family. FAD serves as cofactor.

It is found in the endoplasmic reticulum membrane. Its subcellular location is the golgi apparatus membrane. It carries out the reaction 5alpha-cholest-8-en-3beta-ol + NADP(+) = zymosterol + NADPH + H(+). It catalyses the reaction cholesterol + NADP(+) = desmosterol + NADPH + H(+). The catalysed reaction is lanosterol + NADPH + H(+) = 24,25-dihydrolanosterol + NADP(+). It functions in the pathway steroid biosynthesis; cholesterol biosynthesis. Functionally, catalyzes the reduction of the delta-24 double bond of sterol intermediates during cholesterol biosynthesis. In addition to its cholesterol-synthesizing activity, can protect cells from oxidative stress by reducing caspase 3 activity during apoptosis induced by oxidative stress. Also protects against amyloid-beta peptide-induced apoptosis. The chain is Delta(24)-sterol reductase (Dhcr24) from Mus musculus (Mouse).